The chain runs to 193 residues: MSFELPALPYAKDALAPHISAETIEYHYGKHHQTYVTNLNNLIKGTAFEGKSLEEIIRSSEGGVFNNAAQVWNHTFYWNCLAPNAGGEPTGKVAEAIAASFGSFADFKAQFTDAAIKNFGSGWTWLVKNSDGKLAIVSTSNAGTPLTTDATPLLTVDVWEHAYYIDYRNARPGYLEHFWALVNWEFVAKNLAA.

His27 lines the Fe cation pocket. The residue at position 51 (Lys51) is an N6-acetyllysine. Fe cation-binding residues include His74, Asp157, and His161.

Belongs to the iron/manganese superoxide dismutase family. Homodimer. Fe cation serves as cofactor.

The catalysed reaction is 2 superoxide + 2 H(+) = H2O2 + O2. Functionally, destroys superoxide anion radicals which are normally produced within the cells and which are toxic to biological systems. This chain is Superoxide dismutase [Fe] (sodB), found in Escherichia coli O157:H7.